The sequence spans 185 residues: Ribosome-recycling factor (185 aa).

It belongs to the RRF family.

It is found in the cytoplasm. Functionally, responsible for the release of ribosomes from messenger RNA at the termination of protein biosynthesis. May increase the efficiency of translation by recycling ribosomes from one round of translation to another. This Dichelobacter nodosus (strain VCS1703A) protein is Ribosome-recycling factor.